A 194-amino-acid polypeptide reads, in one-letter code: MTAIQLIVGLGNPGPEYEQTRHNAGALFVERLASAQRVSLTADKKYFGLTAKFSHQGNDVRLLIPTTYMNRSGQSVAALANFFRIKPEAILVAHDELDLPPGVAKLKRGGGHGGHNGLRDIIAQLGNQNDFHRLRLGIGHPGDAKLVSNFVLGRAPRAEQEKLDASIDFALGVMPDVLAGDFAKAMRELHCQKA.

Tyr-17 contacts tRNA. His-22 (proton acceptor) is an active-site residue. Positions 68, 70, and 116 each coordinate tRNA.

This sequence belongs to the PTH family. As to quaternary structure, monomer.

It is found in the cytoplasm. It catalyses the reaction an N-acyl-L-alpha-aminoacyl-tRNA + H2O = an N-acyl-L-amino acid + a tRNA + H(+). In terms of biological role, hydrolyzes ribosome-free peptidyl-tRNAs (with 1 or more amino acids incorporated), which drop off the ribosome during protein synthesis, or as a result of ribosome stalling. Functionally, catalyzes the release of premature peptidyl moieties from peptidyl-tRNA molecules trapped in stalled 50S ribosomal subunits, and thus maintains levels of free tRNAs and 50S ribosomes. The chain is Peptidyl-tRNA hydrolase from Pseudomonas entomophila (strain L48).